The following is a 263-amino-acid chain: MWELRSASFWRAIFAEFFATLFYVFFGLGSSLRWAPGPLHVLQVALAFGLALATLVQTVGHISGAHVNPAVTFAFLVGSQMSLLRAFCYIAAQLLGAVAGAAVLYSVTPPAVRGNLALNTLHAGVSVGQATTVEIFLTLQFVLCIFATYDERRNGRMGSVALAVGFSLTLGHLFGMYYTGAGMNPARSFAPAILTRNFSNHWVYWVGPIIGGGLGSLLYDFLLFPRLKSVSERLSILKGARPSDSNGQPEGTGEPVELKTQAL.

Over 1–9 (MWELRSASF) the chain is Cytoplasmic. Residues 10-29 (WRAIFAEFFATLFYVFFGLG) traverse the membrane as a helical segment. Topologically, residues 30 to 41 (SSLRWAPGPLHV) are extracellular. Residues 42-59 (LQVALAFGLALATLVQTV) form a helical membrane-spanning segment. The Cytoplasmic portion of the chain corresponds to 60 to 61 (GH). An intramembrane region (discontinuously helical) is located at residues 62–77 (ISGAHVNPAVTFAFLV). The NPA 1 motif lies at 68 to 70 (NPA). Over 78–82 (GSQMS) the chain is Cytoplasmic. Residues 83 to 106 (LLRAFCYIAAQLLGAVAGAAVLYS) traverse the membrane as a helical segment. Residues 107 to 127 (VTPPAVRGNLALNTLHAGVSV) lie on the Extracellular side of the membrane. Residues 128–148 (GQATTVEIFLTLQFVLCIFAT) traverse the membrane as a helical segment. The Cytoplasmic portion of the chain corresponds to 149 to 156 (YDERRNGR). The chain crosses the membrane as a helical span at residues 157 to 175 (MGSVALAVGFSLTLGHLFG). The Extracellular segment spans residues 176–178 (MYY). Positions 179–193 (TGAGMNPARSFAPAI) form an intramembrane region, discontinuously helical. Positions 184 to 186 (NPA) match the NPA 2 motif. Topologically, residues 194-200 (LTRNFSN) are extracellular. A helical membrane pass occupies residues 201–222 (HWVYWVGPIIGGGLGSLLYDFL). Topologically, residues 223–263 (LFPRLKSVSERLSILKGARPSDSNGQPEGTGEPVELKTQAL) are cytoplasmic. Residues 227–237 (LKSVSERLSIL) form an interaction with CALM region. 3 positions are modified to phosphoserine: serine 235, serine 243, and serine 245. Residues 240–263 (ARPSDSNGQPEGTGEPVELKTQAL) form a disordered region. A Deamidated asparagine modification is found at asparagine 246.

It belongs to the MIP/aquaporin (TC 1.A.8) family. Homotetramer; each monomer provides an independent water pore. Two homotetramers on opposing membranes can dimerize, forming a cell-cell junction. Interacts with CALM; the calcium-calmodulin/CALM complex interacts with the cytoplasmic domains of two aquaporins, leading to channel closure. Interacts with BFSP1 (via C-terminus); prevents calcium-dependent inhibition of the water channel activity. Post-translationally, subject to partial proteolytic cleavage in the eye lens core. Partial proteolysis promotes interactions between tetramers from adjoining membranes. In terms of processing, fatty acylated at Met-1 and Lys-238. The acyl modifications, in decreasing order of ion abundance, are: oleoyl (C18:1) &gt; palmitoyl (C16:0) &gt; stearoyl (C18:0) &gt; eicosenoyl (C20:1) &gt; dihomo-gamma-linolenoyl (C20:3) &gt; palmitoleoyl (C16:1) &gt; eicosadienoyl (C20:2).

The protein resides in the cell membrane. Its subcellular location is the cell junction. The catalysed reaction is H2O(in) = H2O(out). The water channel activity is inhibited by calcium through calmodulin/CALM. Aquaporins form homotetrameric transmembrane channels, with each monomer independently mediating water transport across the plasma membrane along its osmotic gradient. Specifically expressed in lens fiber cells, this aquaporin is crucial for maintaining lens water homeostasis and transparency. Beyond water permeability, it also acts as a cell-to-cell adhesion molecule, forming thin junctions between lens fiber cells that are essential for maintaining the ordered structure and transparency of the lens. This Rattus norvegicus (Rat) protein is Lens fiber major intrinsic protein.